Consider the following 258-residue polypeptide: Regulatory protein RecX (258 aa).

The protein belongs to the RecX family.

It localises to the cytoplasm. In terms of biological role, modulates RecA activity. In Streptococcus mutans serotype c (strain ATCC 700610 / UA159), this protein is Regulatory protein RecX.